The following is a 475-amino-acid chain: Argininosuccinate lyase (475 aa).

The protein belongs to the lyase 1 family. Argininosuccinate lyase subfamily.

It is found in the cytoplasm. The catalysed reaction is 2-(N(omega)-L-arginino)succinate = fumarate + L-arginine. Its pathway is amino-acid biosynthesis; L-arginine biosynthesis; L-arginine from L-ornithine and carbamoyl phosphate: step 3/3. The chain is Argininosuccinate lyase from Leifsonia xyli subsp. xyli (strain CTCB07).